The following is a 467-amino-acid chain: Mothers against decapentaplegic homolog 2 (467 aa).

An N-acetylserine modification is found at S2. T8 is modified (phosphothreonine). One can recognise an MH1 domain in the interval 10–176 (PVVKRLLGWK…YQRVETPVLP (167 aa)). K19 carries the N6-acetyllysine modification. Zn(2+) is bound by residues C74, C149, C161, and H166. Residues 207–217 (PAGIEPQSNYI) show a composition bias toward polar residues. A disordered region spans residues 207-251 (PAGIEPQSNYIPETPPPGYISEDGETSDQQLNQSMDTGSPAELSP). T220 is modified (phosphothreonine). Positions 221–225 (PPPGY) match the PY-motif motif. Over residues 233–243 (SDQQLNQSMDT) the composition is skewed to polar residues. S240 carries the post-translational modification Phosphoserine; by CAMK2. Phosphoserine occurs at positions 245, 250, 255, 458, 460, and 464. The 194-residue stretch at 274–467 (WCSIAYYELN…SPSVRCSSMS (194 aa)) folds into the MH2 domain. Residues S465 and S467 each carry the phosphoserine; by TGFBR1 modification.

The protein belongs to the dwarfin/SMAD family. As to quaternary structure, monomer; in the absence of TGF-beta. Heterodimer; in the presence of TGF-beta. Forms a heterodimer with co-SMAD, SMAD4, in the nucleus to form the transactivation complex SMAD2/SMAD4. Found in a complex with SMAD3 and TRIM33 upon addition of TGF-beta. Identified in a complex that contains at least ZNF451, SMAD2, SMAD3 and SMAD4. Interacts (via the MH2 domain) with ZFYVE9; may form trimers with the SMAD4 co-SMAD. Interacts with TAZ/WWRT1. Interacts with FOXH1. Interacts with SNW1. Interacts with CREB-binding protein (CBP) and EP300. Interacts with SNON. Interacts with ALK4/ACVR1B. Interacts with SKOR1. Interacts with SKOR2. Interacts with PRDM16. Interacts (via MH2 domain) with LEMD3. Interacts with RBPMS. Interacts with WWP1. Interacts (dephosphorylated form, via the MH1 and MH2 domains) with RANBP3 (via its C-terminal R domain); the interaction results in the export of dephosphorylated SMAD3 out of the nucleus and termination of the TGF-beta signaling. Interacts with PDPK1 (via PH domain). Interacts with DAB2; the interactions are enhanced upon TGF-beta stimulation. Interacts with USP15. Interacts with PPP5C. Interacts with LDLRAD4 (via the SMAD interaction motif). Interacts (via MH2 domain) with PMEPA1 (via the SMAD interaction motif). Interacts with ZFHX3. Interacts with ZNF451. Interacts with SMURF2 when phosphorylated on Ser-465/467. Interacts with PPM1A. Interacts with TGF-beta. Interacts with TGFBR1. Interacts with TGIF. Interacts with SMAD3 and TRIM33. Interacts with ZNF580. Interacts with NEDD4L in response to TGF-beta. Interacts with HGS. Interacts with AIP1. Interacts with WWP1. Interacts with PML. Interacts weakly with ZNF8. Interacts (when phosphorylated) with RNF111; RNF111 acts as an enhancer of the transcriptional responses by mediating ubiquitination and degradation of SMAD2 inhibitors. Interacts with YAP1 (when phosphorylated at 'Ser-55'). Interacts when phosphorylated with IPO7; the interaction facilitates translocation of SMAD2 to the nucleus. Interacts with MTMR4; negatively regulates TGF-beta signaling through SMAD2 dephosphorylation and retention in endosomes. Post-translationally, in response to TGF-beta, phosphorylated on the C-terminal SXS motif by TGF-beta and activin type 1 receptor kinases, phosphorylation declines progressively in a KMT5A-dependent manner. Phosphorylation in this motif is required for interaction with a number of proteins including SMURF2, SNON and SMAD4 in response to TGF-beta. Dephosphorylated in this motif by PPM1A leading to disruption of the SMAD2/3-SMAD4 complex, nuclear export and termination of the TGF-beta signaling. In response to decorin, the naturally occurring inhibitor of TGF-beta signaling, phosphorylated on Ser-240 by CaMK2. Phosphorylated by MAPK3 upon EGF stimulation; which increases transcriptional activity and stability, and is blocked by calmodulin. Phosphorylated by PDPK1. In terms of processing, acetylated on Lys-19 by coactivators in response to TGF-beta signaling, which increases transcriptional activity. In response to TGF-beta, ubiquitinated by NEDD4L; which promotes its degradation. Monoubiquitinated, leading to prevent DNA-binding. Deubiquitination by USP15 alleviates inhibition and promotes activation of TGF-beta target genes. Ubiquitinated by RNF111, leading to its degradation: only SMAD2 proteins that are 'in use' are targeted by RNF111, RNF111 playing a key role in activating SMAD2 and regulating its turnover.

The protein localises to the cytoplasm. Its subcellular location is the nucleus. In terms of biological role, receptor-regulated SMAD (R-SMAD) that is an intracellular signal transducer and transcriptional modulator activated by TGF-beta (transforming growth factor) and activin type 1 receptor kinases. Binds the TRE element in the promoter region of many genes that are regulated by TGF-beta and, on formation of the SMAD2/SMAD4 complex, activates transcription. Promotes TGFB1-mediated transcription of odontoblastic differentiation genes in dental papilla cells. Positively regulates PDPK1 kinase activity by stimulating its dissociation from the 14-3-3 protein YWHAQ which acts as a negative regulator. This is Mothers against decapentaplegic homolog 2 (SMAD2) from Bos taurus (Bovine).